The following is a 249-amino-acid chain: uncharacterized protein (249 aa).

Its subcellular location is the cytoplasm. It localises to the nucleus. This is an uncharacterized protein from Schizosaccharomyces pombe (strain 972 / ATCC 24843) (Fission yeast).